Reading from the N-terminus, the 172-residue chain is Methylated-DNA--protein-cysteine methyltransferase (172 aa).

C142 serves as the catalytic Nucleophile; methyl group acceptor.

This sequence belongs to the MGMT family.

It localises to the cytoplasm. It carries out the reaction a 6-O-methyl-2'-deoxyguanosine in DNA + L-cysteinyl-[protein] = S-methyl-L-cysteinyl-[protein] + a 2'-deoxyguanosine in DNA. The catalysed reaction is a 4-O-methyl-thymidine in DNA + L-cysteinyl-[protein] = a thymidine in DNA + S-methyl-L-cysteinyl-[protein]. Functionally, involved in the cellular defense against the biological effects of O6-methylguanine (O6-MeG) and O4-methylthymine (O4-MeT) in DNA. Repairs the methylated nucleobase in DNA by stoichiometrically transferring the methyl group to a cysteine residue in the enzyme. This is a suicide reaction: the enzyme is irreversibly inactivated. This Pyrococcus horikoshii (strain ATCC 700860 / DSM 12428 / JCM 9974 / NBRC 100139 / OT-3) protein is Methylated-DNA--protein-cysteine methyltransferase.